A 629-amino-acid polypeptide reads, in one-letter code: Kelch-like protein 8 (629 aa).

The segment covering 1–10 (MASESTNGKQ) has biased composition (polar residues). Residues 1–40 (MASESTNGKQARSHVTKGRRQYQHQHQQQQQQQQQVRSRS) are disordered. The residue at position 2 (Ala-2) is an N-acetylalanine. Positions 11 to 23 (ARSHVTKGRRQYQ) are enriched in basic residues. The span at 24 to 35 (HQHQQQQQQQQQ) shows a compositional bias: low complexity. Residues 76-143 (CDVTLKVGSK…VYSSRLTLTV (68 aa)) form the BTB domain. In terms of domain architecture, BACK spans 178-279 (CLAVRAFAES…LPVDFLMGVV (102 aa)). 6 Kelch repeats span residues 328–375 (VLFC…SVEG), 376–422 (KVYA…SLGG), 424–469 (IYAI…ALIN), 471–516 (VYAV…ELHG), 517–563 (CLYV…TVMG), and 565–610 (IFAV…VCDC).

In terms of assembly, component of the BCR(KLHL8) E3 ubiquitin ligase complex, at least composed of CUL3, KLHL8 and RBX1. Interacts with RAPSN.

It functions in the pathway protein modification; protein ubiquitination. Substrate-specific adapter of a BCR (BTB-CUL3-RBX1) E3 ubiquitin ligase complex required for The BCR(KLHL8) ubiquitin ligase complex mediates ubiquitination and degradation of RAPSN. The polypeptide is Kelch-like protein 8 (Klhl8) (Mus musculus (Mouse)).